The chain runs to 385 residues: Regulatory protein E2 (385 aa).

The segment at 1 to 199 is transactivation domain; the sequence is MEKLSEALDL…QPTTIPTTSA (199 aa). The segment covering 189-201 has biased composition (polar residues); that stretch reads NQPTTIPTTSAAG. Residues 189 to 282 are disordered; sequence NQPTTIPTTS…VGSKHQLRTT (94 aa). A compositionally biased stretch (basic residues) spans 225–247; sequence GPSRRPGRRSSRFPRRSGGRGRL. The span at 261 to 275 shows a compositional bias: low complexity; that stretch reads PSSSWSPPSPQQVGS. Positions 298-385 are DNA-binding domain; sequence DPPVLVLAGD…RVFRGGLDEL (88 aa).

It belongs to the papillomaviridae E2 protein family. As to quaternary structure, binds DNA as homodimer. Interacts with protein E1; this interaction greatly increases E1 DNA-binding activity. Interacts with protein L1; this interaction enhances E2-dependent replication and transcription activation. Interacts with protein L2; this interaction inhibits E2 transcriptional activity but not DNA replication function E2. Interacts with protein E7; this interaction inhibits E7 oncogenic activity. Interacts with host TAF1; this interaction modulates E2-dependent transcriptional regulation. Interacts with host BRD4; this interaction mediates E2 transcriptional activation function. Additionally, the interaction with host BRD4 on mitotic chromosomes mediates tethering of the viral genome. Interacts with host TOPBP1; this interaction is required for optimal viral DNA replication. Phosphorylated.

It localises to the host nucleus. In terms of biological role, plays a role in the initiation of viral DNA replication. A dimer of E2 interacts with a dimer of E1 in order to improve specificity of E1 DNA binding activity. Once the complex recognizes and binds DNA at specific sites, the E2 dimer is removed from DNA. E2 also regulates viral transcription through binding to the E2RE response element (5'-ACCNNNNNNGGT-3') present in multiple copies in the regulatory regions of the viral genome. Activates or represses transcription depending on E2RE's position with regards to proximal promoter elements including the TATA-box. Repression occurs by sterically hindering the assembly of the transcription initiation complex. In Canis lupus familiaris (Dog), this protein is Regulatory protein E2.